Reading from the N-terminus, the 291-residue chain is Heterogeneous nuclear ribonucleoprotein D-like-B (291 aa).

RRM domains lie at 34–116 and 119–196; these read SKMF…QGKE and KKVF…AAQP. Residues 196-226 form a disordered region; sequence PKEVYRQQQQKQQKGGRGGTRGRGRGQGYSN. Over residues 210 to 222 the composition is skewed to gly residues; it reads GGRGGTRGRGRGQ.

It localises to the nucleus. It is found in the cytoplasm. In terms of biological role, acts as a transcriptional regulator. Binds DNA and RNA. This chain is Heterogeneous nuclear ribonucleoprotein D-like-B (hnrnpdl-b), found in Xenopus laevis (African clawed frog).